The following is a 127-amino-acid chain: Large ribosomal subunit protein uL22 (127 aa).

In terms of assembly, part of the 50S ribosomal subunit.

In terms of biological role, this protein binds specifically to 23S rRNA; its binding is stimulated by other ribosomal proteins, e.g. L4, L17, and L20. It is important during the early stages of 50S assembly. It makes multiple contacts with different domains of the 23S rRNA in the assembled 50S subunit and ribosome. The globular domain of the protein is located near the polypeptide exit tunnel on the outside of the subunit, while an extended beta-hairpin is found that lines the wall of the exit tunnel in the center of the 70S ribosome. In Rhodopseudomonas palustris (strain ATCC BAA-98 / CGA009), this protein is Large ribosomal subunit protein uL22.